The following is a 171-amino-acid chain: CDP-archaeol synthase (171 aa).

The next 5 membrane-spanning stretches (helical) occupy residues 7 to 27, 55 to 75, 84 to 104, 115 to 135, and 141 to 161; these read MFWA…PVLL, FLGG…LTPA, VLLA…GSFI, PAVG…AYPV, and GQML…NYFA.

The protein belongs to the CDP-archaeol synthase family. Mg(2+) is required as a cofactor.

Its subcellular location is the cell membrane. The catalysed reaction is 2,3-bis-O-(geranylgeranyl)-sn-glycerol 1-phosphate + CTP + H(+) = CDP-2,3-bis-O-(geranylgeranyl)-sn-glycerol + diphosphate. It functions in the pathway membrane lipid metabolism; glycerophospholipid metabolism. In terms of biological role, catalyzes the formation of CDP-2,3-bis-(O-geranylgeranyl)-sn-glycerol (CDP-archaeol) from 2,3-bis-(O-geranylgeranyl)-sn-glycerol 1-phosphate (DGGGP) and CTP. This reaction is the third ether-bond-formation step in the biosynthesis of archaeal membrane lipids. The polypeptide is CDP-archaeol synthase (Thermococcus gammatolerans (strain DSM 15229 / JCM 11827 / EJ3)).